We begin with the raw amino-acid sequence, 149 residues long: Protein DOWN-REGULATED IN DIF1 11 (149 aa).

The N-terminal stretch at 1 to 22 (MEKAILITFLIATTSMVYQTIG) is a signal peptide.

Mostly expressed in embryo sac cells. Restricted to synergid cells, especially in the filiform apparatus of mature female gametophyte, via MYB98-mediated transcription regulation. Also detected at low levels in egg and central cells.

The sequence is that of Protein DOWN-REGULATED IN DIF1 11 from Arabidopsis thaliana (Mouse-ear cress).